The sequence spans 1040 residues: Regulator of telomere elongation helicase 1 homolog (1040 aa).

The Helicase ATP-binding domain occupies 52-355 (RGINVEFPFE…KGLLLKLQEL (304 aa)). 87–94 (SPTGTGKT) contacts ATP. Residues 117–137 (RKNSAIPWSDSDEPLSQSGGG) form a disordered region. Residues cysteine 181, cysteine 202, cysteine 210, and cysteine 246 each contribute to the [4Fe-4S] cluster site. The DEAH box signature appears at 289–292 (DEAH). The tract at residues 926–949 (KVPESQGSASSSVLTAKGNGGGDK) is disordered. Residues 930–939 (SQGSASSSVL) show a composition bias toward polar residues. Positions 992–999 (QSIVQLFC) match the PIP-box; degenerate motif.

It belongs to the helicase family. RAD3/XPD subfamily.

It is found in the nucleus. The catalysed reaction is ATP + H2O = ADP + phosphate + H(+). Functionally, a probable ATP-dependent DNA helicase implicated in DNA replication, DNA repair and the maintenance of genomic stability. Acts as an anti-recombinase to counteract toxic recombination and limit crossover during meiosis. Regulates meiotic recombination and crossover homeostasis by physically dissociating strand invasion events and thereby promotes noncrossover repair by meiotic synthesis dependent strand annealing (SDSA) as well as disassembly of D loop recombination intermediates. Also plays a role in preserving the stability of 45S rDNA repeats. The sequence is that of Regulator of telomere elongation helicase 1 homolog from Arabidopsis thaliana (Mouse-ear cress).